The sequence spans 305 residues: Sulfate adenylyltransferase subunit 2 (305 aa).

Belongs to the PAPS reductase family. CysD subfamily. In terms of assembly, heterodimer composed of CysD, the smaller subunit, and CysN.

It catalyses the reaction sulfate + ATP + H(+) = adenosine 5'-phosphosulfate + diphosphate. The protein operates within sulfur metabolism; hydrogen sulfide biosynthesis; sulfite from sulfate: step 1/3. With CysN forms the ATP sulfurylase (ATPS) that catalyzes the adenylation of sulfate producing adenosine 5'-phosphosulfate (APS) and diphosphate, the first enzymatic step in sulfur assimilation pathway. APS synthesis involves the formation of a high-energy phosphoric-sulfuric acid anhydride bond driven by GTP hydrolysis by CysN coupled to ATP hydrolysis by CysD. The sequence is that of Sulfate adenylyltransferase subunit 2 from Pseudomonas fluorescens (strain SBW25).